A 67-amino-acid chain; its full sequence is UPF0519 protein C (67 aa).

The tract at residues 18–37 (KSQANLNSNSTNSPNNVQGL) is disordered. The segment covering 22–33 (NLNSNSTNSPNN) has biased composition (low complexity).

Belongs to the UPF0519 family.

This is UPF0519 protein C from Dictyostelium discoideum (Social amoeba).